The following is a 1955-amino-acid chain: Protocadherin-15 (1955 aa).

Positions 1–26 are cleaved as a signal peptide; the sequence is MFRQFYLWTCLASGIILGSLFEICLG. The Extracellular portion of the chain corresponds to 27 to 1376; sequence QYDDDCKLAR…GESLGYTEGA (1350 aa). C32 and C120 are joined by a disulfide. Cadherin domains follow at residues 40-147, 148-265, 278-395, 396-509, 510-616, 617-717, 719-819, 820-926, 927-1035, 1037-1144, and 1145-1259; these read PATI…SPTF, KHES…GPMF, RPLT…SPYF, TMPS…TPTF, PEIS…PPRF, PQLM…APVF, PYLP…SPVF, TNST…PPVF, SKRI…IPRF, QEEY…PPVF, and QKKF…PPTL. N-linked (GlcNAc...) asparagine glycosylation is found at N52, N97, and N201. Residues N419, N559, N662, N724, N768, N821, and N851 are each glycosylated (N-linked (GlcNAc...) asparagine). 3 N-linked (GlcNAc...) asparagine glycosylation sites follow: N1064, N1084, and N1175. The chain crosses the membrane as a helical span at residues 1377–1397; the sequence is LLALAFIIILCCIPAILVVLV. Over 1398 to 1955 the chain is Cytoplasmic; that stretch reads SYRQFKVRQA…KQSHSQSTSL (558 aa). Residues 1426–1444 show a composition bias toward pro residues; it reads VPAPAPVAAPPPPPPPPPG. 4 disordered regions span residues 1426–1446, 1601–1623, 1745–1766, and 1928–1955; these read VPAP…PGAH, QGTR…GSSN, CPLP…APLA, and ITSE…STSL. The segment covering 1928–1941 has biased composition (polar residues); sequence ITSEQNKGSLNNIV.

In terms of assembly, antiparallel heterodimer with CDH23. Found in a complex with TMIE and LHFPL5. Interacts with LHFPL5/TMHS; this interaction is required for efficient localization to hair bundles. Interacts with MYO7A. Interacts with USH1G; this interaction may recruit USH1G to the plasma membrane. Interacts with TOMT. Isoforms CD1 and CD3 interact with TMC1 (via N-terminus) and TMC2 (via N-terminus). In terms of tissue distribution, expressed in brain, lung, kidney, spleen and testis. Found also in the inner and outer synaptic layers, and the nerve fiber layer in adult and fetal retinas. Found in the supporting cells, outer sulcus cells and spiral ganglion of fetal cochlea. Expressed in cytotoxic tumor-derived T- and NK-cell lines as well as biopsies of nasal NK/T-cell lymphomas. Not detected in normal or in vitro activated peripheral blood cells, CD4 or CD8 lymphocytes or NK cells. Isoform 3 is expressed in brain, heart, cerebellum and kidney. CD1 isoforms, such as isoform 1, have a limited pattern of expression and is detected in testis, retina and cochlea. CD2 isoforms, such as isoforms 4 and 5, are expressed in heart, kidney, thymus, spleen, testis, retina and cochlea. CD3 isoforms, such as isoform 6, are widely expressed.

The protein resides in the cell membrane. Its subcellular location is the secreted. In terms of biological role, calcium-dependent cell-adhesion protein. Essential for maintenance of normal retinal and cochlear function. The protein is Protocadherin-15 (PCDH15) of Homo sapiens (Human).